A 236-amino-acid polypeptide reads, in one-letter code: uncharacterized protein (236 aa).

This is an uncharacterized protein from Escherichia coli O157:H7.